The chain runs to 279 residues: Pantothenate synthetase (279 aa).

An ATP-binding site is contributed by 31-38 (MGALHEGH). Residue His-38 is the Proton donor of the active site. Gln-62 provides a ligand contact to (R)-pantoate. Gln-62 is a binding site for beta-alanine. 148–151 (GEKD) lines the ATP pocket. Gln-154 contacts (R)-pantoate. Residues Val-177 and 185–188 (LSSR) each bind ATP.

This sequence belongs to the pantothenate synthetase family. Homodimer.

It localises to the cytoplasm. The enzyme catalyses (R)-pantoate + beta-alanine + ATP = (R)-pantothenate + AMP + diphosphate + H(+). The protein operates within cofactor biosynthesis; (R)-pantothenate biosynthesis; (R)-pantothenate from (R)-pantoate and beta-alanine: step 1/1. Catalyzes the condensation of pantoate with beta-alanine in an ATP-dependent reaction via a pantoyl-adenylate intermediate. The chain is Pantothenate synthetase from Cereibacter sphaeroides (strain ATCC 17029 / ATH 2.4.9) (Rhodobacter sphaeroides).